A 386-amino-acid polypeptide reads, in one-letter code: ATP phosphoribosyltransferase regulatory subunit (386 aa).

The protein belongs to the class-II aminoacyl-tRNA synthetase family. HisZ subfamily. As to quaternary structure, heteromultimer composed of HisG and HisZ subunits.

Its subcellular location is the cytoplasm. It functions in the pathway amino-acid biosynthesis; L-histidine biosynthesis; L-histidine from 5-phospho-alpha-D-ribose 1-diphosphate: step 1/9. Functionally, required for the first step of histidine biosynthesis. May allow the feedback regulation of ATP phosphoribosyltransferase activity by histidine. This Limosilactobacillus fermentum (strain NBRC 3956 / LMG 18251) (Lactobacillus fermentum) protein is ATP phosphoribosyltransferase regulatory subunit.